We begin with the raw amino-acid sequence, 292 residues long: Nitrogenase iron protein 2 (292 aa).

8-15 (GKGGIGKS) contributes to the ATP binding site. Residue Cys106 coordinates [4Fe-4S] cluster. Arg109 carries the post-translational modification ADP-ribosylarginine; by dinitrogenase reductase ADP-ribosyltransferase. Cys142 serves as a coordination point for [4Fe-4S] cluster.

This sequence belongs to the NifH/BchL/ChlL family. In terms of assembly, homodimer. The cofactor is [4Fe-4S] cluster. The reversible ADP-ribosylation of Arg-109 inactivates the nitrogenase reductase and regulates nitrogenase activity.

The catalysed reaction is N2 + 8 reduced [2Fe-2S]-[ferredoxin] + 16 ATP + 16 H2O = H2 + 8 oxidized [2Fe-2S]-[ferredoxin] + 2 NH4(+) + 16 ADP + 16 phosphate + 6 H(+). Its function is as follows. The key enzymatic reactions in nitrogen fixation are catalyzed by the nitrogenase complex, which has 2 components: the iron protein and the molybdenum-iron protein. In Methanothermococcus thermolithotrophicus (Methanococcus thermolithotrophicus), this protein is Nitrogenase iron protein 2 (nifH2).